The following is a 357-amino-acid chain: tRNA-specific 2-thiouridylase MnmA (357 aa).

Residues 7-14 (AMSGGVDS) and M33 contribute to the ATP site. C101 acts as the Nucleophile in catalysis. C101 and C198 are disulfide-bonded. G125 is an ATP binding site. An interaction with tRNA region spans residues 148–150 (KDQ). The active-site Cysteine persulfide intermediate is C198.

It belongs to the MnmA/TRMU family.

It is found in the cytoplasm. It catalyses the reaction S-sulfanyl-L-cysteinyl-[protein] + uridine(34) in tRNA + AH2 + ATP = 2-thiouridine(34) in tRNA + L-cysteinyl-[protein] + A + AMP + diphosphate + H(+). Catalyzes the 2-thiolation of uridine at the wobble position (U34) of tRNA, leading to the formation of s(2)U34. The sequence is that of tRNA-specific 2-thiouridylase MnmA from Herpetosiphon aurantiacus (strain ATCC 23779 / DSM 785 / 114-95).